The primary structure comprises 180 residues: Large ribosomal subunit protein uL5 (180 aa).

Belongs to the universal ribosomal protein uL5 family. Part of the 50S ribosomal subunit; part of the 5S rRNA/L5/L18/L25 subcomplex. Contacts the 5S rRNA and the P site tRNA. Forms a bridge to the 30S subunit in the 70S ribosome.

This is one of the proteins that bind and probably mediate the attachment of the 5S RNA into the large ribosomal subunit, where it forms part of the central protuberance. In the 70S ribosome it contacts protein S13 of the 30S subunit (bridge B1b), connecting the 2 subunits; this bridge is implicated in subunit movement. Contacts the P site tRNA; the 5S rRNA and some of its associated proteins might help stabilize positioning of ribosome-bound tRNAs. This is Large ribosomal subunit protein uL5 from Clostridium botulinum (strain ATCC 19397 / Type A).